The following is a 454-amino-acid chain: Chaperone SurA (454 aa).

The N-terminal stretch at 1–28 (MKISSFRKGRWLGALALFAVVCWSMADA) is a signal peptide. PpiC domains follow at residues 177–278 (DREY…KMLA) and 287–386 (LTKT…QVLE). The tract at residues 431 to 454 (LDETPASPGEDAPAGEDSPETFMR) is disordered. Acidic residues predominate over residues 443–454 (PAGEDSPETFMR).

It is found in the periplasm. The enzyme catalyses [protein]-peptidylproline (omega=180) = [protein]-peptidylproline (omega=0). Functionally, chaperone involved in the correct folding and assembly of outer membrane proteins. Recognizes specific patterns of aromatic residues and the orientation of their side chains, which are found more frequently in integral outer membrane proteins. May act in both early periplasmic and late outer membrane-associated steps of protein maturation. The polypeptide is Chaperone SurA (Methylococcus capsulatus (strain ATCC 33009 / NCIMB 11132 / Bath)).